The primary structure comprises 165 residues: Endoribonuclease YbeY (165 aa).

3 residues coordinate Zn(2+): His119, His123, and His129.

This sequence belongs to the endoribonuclease YbeY family. Zn(2+) is required as a cofactor.

The protein resides in the cytoplasm. Functionally, single strand-specific metallo-endoribonuclease involved in late-stage 70S ribosome quality control and in maturation of the 3' terminus of the 16S rRNA. The chain is Endoribonuclease YbeY from Streptomyces griseus subsp. griseus (strain JCM 4626 / CBS 651.72 / NBRC 13350 / KCC S-0626 / ISP 5235).